Here is an 886-residue protein sequence, read N- to C-terminus: Isoleucine--tRNA ligase (886 aa).

Positions 60–70 (PYANGDIHIGH) match the 'HIGH' region motif. L-isoleucyl-5'-AMP is bound at residue Glu-546. Positions 587-591 (KMSKS) match the 'KMSKS' region motif. Lys-590 provides a ligand contact to ATP. Residues Cys-856, Cys-859, Cys-870, and Cys-873 each coordinate Zn(2+).

This sequence belongs to the class-I aminoacyl-tRNA synthetase family. IleS type 1 subfamily. As to quaternary structure, monomer. The cofactor is Zn(2+).

The protein resides in the cytoplasm. It carries out the reaction tRNA(Ile) + L-isoleucine + ATP = L-isoleucyl-tRNA(Ile) + AMP + diphosphate. Functionally, catalyzes the attachment of isoleucine to tRNA(Ile). As IleRS can inadvertently accommodate and process structurally similar amino acids such as valine, to avoid such errors it has two additional distinct tRNA(Ile)-dependent editing activities. One activity is designated as 'pretransfer' editing and involves the hydrolysis of activated Val-AMP. The other activity is designated 'posttransfer' editing and involves deacylation of mischarged Val-tRNA(Ile). The chain is Isoleucine--tRNA ligase from Mesomycoplasma hyopneumoniae (strain J / ATCC 25934 / NCTC 10110) (Mycoplasma hyopneumoniae).